The sequence spans 272 residues: Catechol O-methyltransferase (272 aa).

Over 1-6 (MLEAPP) the chain is Cytoplasmic. A helical; Signal-anchor for type II membrane protein membrane pass occupies residues 7–27 (LLLVAGGVGLALLALRWLATT). The Extracellular portion of the chain corresponds to 28 to 272 (DLQFFGRAFI…YKGLSGPARP (245 aa)). Residues V93, E115, S123, E141, 168-171 (GASQ), S170, and D192 contribute to the S-adenosyl-L-methionine site. Position 192 (D192) interacts with Mg(2+). Position 195 (K195) interacts with substrate. Mg(2+)-binding residues include D220 and N221. 2 residues coordinate substrate: N221 and E250. S267 bears the Phosphoserine mark.

Belongs to the class I-like SAM-binding methyltransferase superfamily. Cation-dependent O-methyltransferase family. It depends on Mg(2+) as a cofactor.

The protein localises to the cytoplasm. It localises to the cell membrane. It carries out the reaction a catechol + S-adenosyl-L-methionine = a guaiacol + S-adenosyl-L-homocysteine + H(+). It catalyses the reaction 2-hydroxyestrone + S-adenosyl-L-methionine = 2-hydroxy-3-methoxy-estrone + S-adenosyl-L-homocysteine + H(+). The catalysed reaction is 4-hydroxyestrone + S-adenosyl-L-methionine = 4-methoxyestrone + S-adenosyl-L-homocysteine + H(+). The enzyme catalyses 2-hydroxyestrone + S-adenosyl-L-methionine = 2-methoxyestrone + S-adenosyl-L-homocysteine + H(+). It carries out the reaction 4-hydroxy-17beta-estradiol + S-adenosyl-L-methionine = 4-methoxy-17beta-estradiol + S-adenosyl-L-homocysteine + H(+). It catalyses the reaction 2-hydroxy-17beta-estradiol + S-adenosyl-L-methionine = 2-hydroxy-3-methoxy-17beta-estradiol + S-adenosyl-L-homocysteine + H(+). The catalysed reaction is 2-hydroxy-17beta-estradiol + S-adenosyl-L-methionine = 2-methoxy-17beta-estradiol + S-adenosyl-L-homocysteine + H(+). Catalyzes the O-methylation, and thereby the inactivation, of catecholamine neurotransmitters and catechol hormones. Also shortens the biological half-lives of certain neuroactive drugs, like L-DOPA, alpha-methyl DOPA and isoproterenol. This is Catechol O-methyltransferase (COMT) from Bos taurus (Bovine).